The primary structure comprises 345 residues: uncharacterized protein (345 aa).

PDZ GRASP-type domains are found at residues Cys27 to Ile112 and Ala118 to Leu207. Positions Cys27–Asp223 are GRASP. The tract at residues Pro229–Asn345 is disordered. Over residues Lys297–Asp308 the composition is skewed to basic and acidic residues. 2 stretches are compositionally biased toward polar residues: residues Ala309–Thr318 and Val328–Gln338.

It localises to the golgi apparatus membrane. This is an uncharacterized protein from Schizosaccharomyces pombe (strain 972 / ATCC 24843) (Fission yeast).